The primary structure comprises 518 residues: Protease Do-like 4, mitochondrial (518 aa).

Residues 1–23 constitute a mitochondrion transit peptide; the sequence is MLFRFLQTLARFCRFLLISVLGF. The tract at residues 98–262 is serine protease; that stretch reads ESGGSGFVIS…IPTPVIKHFL (165 aa). Catalysis depends on charge relay system residues His116, Asp147, and Ser225. One can recognise a PDZ domain in the interval 278-358; sequence DISYQLMENS…HFVSMKKLDE (81 aa).

The protein belongs to the peptidase S1C family.

The protein resides in the mitochondrion membrane. Its function is as follows. Putative serine protease. This is Protease Do-like 4, mitochondrial (DEGP4) from Arabidopsis thaliana (Mouse-ear cress).